Here is a 514-residue protein sequence, read N- to C-terminus: Ribonuclease Y (514 aa).

A helical transmembrane segment spans residues E2–V22. The KH domain maps to L204–L268. The HD domain maps to A330–A423.

This sequence belongs to the RNase Y family.

It localises to the cell membrane. Functionally, endoribonuclease that initiates mRNA decay. In Aliarcobacter butzleri (strain RM4018) (Arcobacter butzleri), this protein is Ribonuclease Y.